The chain runs to 147 residues: Fibromodulin (147 aa).

6 LRR repeats span residues 1–15, 16–37, 40–61, 63–84, 85–105, and 108–128; these read LDHNNLTRMPGPLPR, SLRELHLDHNQISRVPNNALEG, NLTALYLQHNEIQEVGSSMRGL, SLILLDLSYNHLRKVPDGLPSA, LEQLYLEHNNVYSVPDSYFRG, and KLLYVRLSHNSLTNNGLASNT. N-linked (GlcNAc...) (keratan sulfate) asparagine glycosylation is present at Asn-5. Residue Asn-40 is glycosylated (N-linked (GlcNAc...) (keratan sulfate) asparagine). N-linked (GlcNAc...) (keratan sulfate) asparagine glycosylation occurs at Asn-130. Residues 133–147 form an LRR 7 repeat; the sequence is SLLELDLSYNQLQKI.

Belongs to the small leucine-rich proteoglycan (SLRP) family. SLRP class II subfamily. Binds to type I and type II collagen. In terms of processing, binds keratan sulfate chains.

It localises to the secreted. The protein resides in the extracellular space. Its subcellular location is the extracellular matrix. Affects the rate of fibrils formation. May have a primary role in collagen fibrillogenesis. The sequence is that of Fibromodulin (FMOD) from Sus scrofa (Pig).